The chain runs to 316 residues: Biotin synthase (316 aa).

Residues Asn-36–Ala-260 form the Radical SAM core domain. [4Fe-4S] cluster-binding residues include Cys-51, Cys-55, and Cys-58. Residues Cys-95, Cys-126, Cys-186, and Arg-258 each contribute to the [2Fe-2S] cluster site.

This sequence belongs to the radical SAM superfamily. Biotin synthase family. In terms of assembly, homodimer. The cofactor is [4Fe-4S] cluster. [2Fe-2S] cluster serves as cofactor.

The catalysed reaction is (4R,5S)-dethiobiotin + (sulfur carrier)-SH + 2 reduced [2Fe-2S]-[ferredoxin] + 2 S-adenosyl-L-methionine = (sulfur carrier)-H + biotin + 2 5'-deoxyadenosine + 2 L-methionine + 2 oxidized [2Fe-2S]-[ferredoxin]. Its pathway is cofactor biosynthesis; biotin biosynthesis; biotin from 7,8-diaminononanoate: step 2/2. Functionally, catalyzes the conversion of dethiobiotin (DTB) to biotin by the insertion of a sulfur atom into dethiobiotin via a radical-based mechanism. This chain is Biotin synthase, found in Lawsonia intracellularis (strain PHE/MN1-00).